The chain runs to 125 residues: Small ribosomal subunit protein uS13 (125 aa).

Positions 92–125 (RRSLPARGQRTRTNARTRKGKRKTVAGKKKAGKK) are disordered.

The protein belongs to the universal ribosomal protein uS13 family. As to quaternary structure, part of the 30S ribosomal subunit. Forms a loose heterodimer with protein S19. Forms two bridges to the 50S subunit in the 70S ribosome.

In terms of biological role, located at the top of the head of the 30S subunit, it contacts several helices of the 16S rRNA. In the 70S ribosome it contacts the 23S rRNA (bridge B1a) and protein L5 of the 50S subunit (bridge B1b), connecting the 2 subunits; these bridges are implicated in subunit movement. Contacts the tRNAs in the A and P-sites. The polypeptide is Small ribosomal subunit protein uS13 (Chlorobaculum parvum (strain DSM 263 / NCIMB 8327) (Chlorobium vibrioforme subsp. thiosulfatophilum)).